The sequence spans 125 residues: Small ribosomal subunit protein uS12 (125 aa).

The residue at position 89 (Asp-89) is a 3-methylthioaspartic acid.

The protein belongs to the universal ribosomal protein uS12 family. As to quaternary structure, part of the 30S ribosomal subunit. Contacts proteins S8 and S17. May interact with IF1 in the 30S initiation complex.

In terms of biological role, with S4 and S5 plays an important role in translational accuracy. Its function is as follows. Interacts with and stabilizes bases of the 16S rRNA that are involved in tRNA selection in the A site and with the mRNA backbone. Located at the interface of the 30S and 50S subunits, it traverses the body of the 30S subunit contacting proteins on the other side and probably holding the rRNA structure together. The combined cluster of proteins S8, S12 and S17 appears to hold together the shoulder and platform of the 30S subunit. The chain is Small ribosomal subunit protein uS12 from Clostridium botulinum (strain ATCC 19397 / Type A).